The primary structure comprises 493 residues: Rho guanine nucleotide exchange factor 9 (493 aa).

The SH3 domain maps to 15–74 (DSIVSAEAVWDHVTMANRGVAFKAGDVIKVLDASNKDWWWGQIDDEEGWFPASFVRLWVN). Positions 107–117 (RDQMRANVINE) are interaction with GPHN. Residues 110-294 (MRANVINEIM…RNVTQQINER (185 aa)) form the DH domain. The region spanning 325–432 (ELIYTGEMAW…WLRAFREERK (108 aa)) is the PH domain. The disordered stretch occupies residues 453–473 (AMTVRKASKQKGRVGEEENQS).

As to quaternary structure, interacts with GPHN. Detected in brain, throughout the gray matter. Detected at low levels in heart and skeletal muscle.

It is found in the cytoplasm. The protein resides in the postsynaptic density. Functionally, acts as a guanine nucleotide exchange factor (GEF) for CDC42. Promotes formation of GPHN clusters. The protein is Rho guanine nucleotide exchange factor 9 (Arhgef9) of Rattus norvegicus (Rat).